The primary structure comprises 91 residues: uncharacterized protein (91 aa).

This is an uncharacterized protein from Bacillus anthracis.